We begin with the raw amino-acid sequence, 485 residues long: Hexokinase (485 aa).

Ser15 carries the phosphoserine modification. The region spanning 21 to 468 is the Hexokinase domain; the sequence is ANLMEQIHGL…SGVGAAIIAC (448 aa). The tract at residues 75–208 is hexokinase small subdomain; sequence TGKETGDFLA…NIPINVVALI (134 aa). Position 111 (Lys111) interacts with ATP. Residues 151–177 are glucose-binding; that stretch reads PLGFTFSYPASQKKINSGVLQRWTKGF. A hexokinase large subdomain region spans residues 209–457; that stretch reads NDTTGTLVAS…HPIQLVAAED (249 aa).

In terms of assembly, monomer and homodimer. The monomeric form is active, the homodimeric form inactive.

It carries out the reaction a D-hexose + ATP = a D-hexose 6-phosphate + ADP + H(+). It catalyses the reaction D-fructose + ATP = D-fructose 6-phosphate + ADP + H(+). The catalysed reaction is D-glucose + ATP = D-glucose 6-phosphate + ADP + H(+). It functions in the pathway carbohydrate metabolism; hexose metabolism. Its pathway is carbohydrate degradation; glycolysis; D-glyceraldehyde 3-phosphate and glycerone phosphate from D-glucose: step 1/4. Catalyzes the phosphorylation of hexose, such as D-glucose and D-fructose, to hexose 6-phosphate (D-glucose 6-phosphate and D-fructose 6-phosphate, respectively). Has higher affinity for D-glucose. Mediates the initial step of glycolysis by catalyzing phosphorylation of D-glucose to D-glucose 6-phosphate. This chain is Hexokinase (RAG5), found in Kluyveromyces lactis (strain ATCC 8585 / CBS 2359 / DSM 70799 / NBRC 1267 / NRRL Y-1140 / WM37) (Yeast).